Consider the following 129-residue polypeptide: Small ribosomal subunit protein uS11 (129 aa).

It belongs to the universal ribosomal protein uS11 family. As to quaternary structure, part of the 30S ribosomal subunit. Interacts with proteins S7 and S18. Binds to IF-3.

Located on the platform of the 30S subunit, it bridges several disparate RNA helices of the 16S rRNA. Forms part of the Shine-Dalgarno cleft in the 70S ribosome. This is Small ribosomal subunit protein uS11 from Halalkalibacterium halodurans (strain ATCC BAA-125 / DSM 18197 / FERM 7344 / JCM 9153 / C-125) (Bacillus halodurans).